The primary structure comprises 311 residues: Methionyl-tRNA formyltransferase (311 aa).

110-113 (SLLP) provides a ligand contact to (6S)-5,6,7,8-tetrahydrofolate.

The protein belongs to the Fmt family.

The catalysed reaction is L-methionyl-tRNA(fMet) + (6R)-10-formyltetrahydrofolate = N-formyl-L-methionyl-tRNA(fMet) + (6S)-5,6,7,8-tetrahydrofolate + H(+). Its function is as follows. Attaches a formyl group to the free amino group of methionyl-tRNA(fMet). The formyl group appears to play a dual role in the initiator identity of N-formylmethionyl-tRNA by promoting its recognition by IF2 and preventing the misappropriation of this tRNA by the elongation apparatus. This chain is Methionyl-tRNA formyltransferase, found in Streptococcus pyogenes serotype M3 (strain ATCC BAA-595 / MGAS315).